The primary structure comprises 301 residues: DSC E3 ubiquitin ligase complex subunit B (301 aa).

A run of 3 helical transmembrane segments spans residues 9 to 29 (APIT…LSIL), 52 to 72 (LATW…AAML), and 90 to 110 (TFII…LVLL). Low complexity predominate over residues 268 to 284 (AAAAASGNAGSASEASG). The segment at 268 to 301 (AAAAASGNAGSASEASGQRQRRREGGIMDRLRAL) is disordered. Basic and acidic residues predominate over residues 290–301 (REGGIMDRLRAL).

As to quaternary structure, component of the DSC E3 ubiquitin ligase complex composed of dscA, dscB, dscC and dscD.

It is found in the endoplasmic reticulum membrane. The catalysed reaction is S-ubiquitinyl-[E2 ubiquitin-conjugating enzyme]-L-cysteine + [acceptor protein]-L-lysine = [E2 ubiquitin-conjugating enzyme]-L-cysteine + N(6)-ubiquitinyl-[acceptor protein]-L-lysine.. It participates in protein modification; protein ubiquitination. In terms of biological role, component of the DSC E3 ubiquitin ligase complex which is required for the srbA transcriptional activator proteolytic cleavage to release the soluble transcription factor from the membrane in low oxygen or sterol conditions. Required for growth during hypoxia and triazole drug susceptibility, as well as for virulence in a murine model of invasive pulmonary aspergillosis (IPA). This is DSC E3 ubiquitin ligase complex subunit B from Aspergillus fumigatus (strain ATCC MYA-4609 / CBS 101355 / FGSC A1100 / Af293) (Neosartorya fumigata).